The chain runs to 290 residues: Phosphatidylglycerol--prolipoprotein diacylglyceryl transferase (290 aa).

7 consecutive transmembrane segments (helical) span residues 21-41 (VSLH…MWLA), 60-80 (LLYA…VLFY), 96-116 (WDGG…MFWF), 130-150 (FIAP…FING), 198-218 (SQLY…NLFI), 225-245 (GAVS…VEAF), and 258-278 (VISM…IMMI). Residue arginine 143 coordinates a 1,2-diacyl-sn-glycero-3-phospho-(1'-sn-glycerol).

Belongs to the Lgt family.

Its subcellular location is the cell inner membrane. The enzyme catalyses L-cysteinyl-[prolipoprotein] + a 1,2-diacyl-sn-glycero-3-phospho-(1'-sn-glycerol) = an S-1,2-diacyl-sn-glyceryl-L-cysteinyl-[prolipoprotein] + sn-glycerol 1-phosphate + H(+). It functions in the pathway protein modification; lipoprotein biosynthesis (diacylglyceryl transfer). In terms of biological role, catalyzes the transfer of the diacylglyceryl group from phosphatidylglycerol to the sulfhydryl group of the N-terminal cysteine of a prolipoprotein, the first step in the formation of mature lipoproteins. The protein is Phosphatidylglycerol--prolipoprotein diacylglyceryl transferase of Serratia proteamaculans (strain 568).